The following is a 547-amino-acid chain: Dihydroxy-acid dehydratase (547 aa).

Aspartate 78 serves as a coordination point for Mg(2+). Cysteine 119 contributes to the [2Fe-2S] cluster binding site. Aspartate 120 and lysine 121 together coordinate Mg(2+). Lysine 121 carries the post-translational modification N6-carboxylysine. [2Fe-2S] cluster is bound at residue cysteine 191. Glutamate 439 contacts Mg(2+). The active-site Proton acceptor is serine 464.

Belongs to the IlvD/Edd family. In terms of assembly, homodimer. It depends on [2Fe-2S] cluster as a cofactor. The cofactor is Mg(2+).

The enzyme catalyses (2R)-2,3-dihydroxy-3-methylbutanoate = 3-methyl-2-oxobutanoate + H2O. It carries out the reaction (2R,3R)-2,3-dihydroxy-3-methylpentanoate = (S)-3-methyl-2-oxopentanoate + H2O. Its pathway is amino-acid biosynthesis; L-isoleucine biosynthesis; L-isoleucine from 2-oxobutanoate: step 3/4. It participates in amino-acid biosynthesis; L-valine biosynthesis; L-valine from pyruvate: step 3/4. Functionally, functions in the biosynthesis of branched-chain amino acids. Catalyzes the dehydration of (2R,3R)-2,3-dihydroxy-3-methylpentanoate (2,3-dihydroxy-3-methylvalerate) into 2-oxo-3-methylpentanoate (2-oxo-3-methylvalerate) and of (2R)-2,3-dihydroxy-3-methylbutanoate (2,3-dihydroxyisovalerate) into 2-oxo-3-methylbutanoate (2-oxoisovalerate), the penultimate precursor to L-isoleucine and L-valine, respectively. The chain is Dihydroxy-acid dehydratase from Archaeoglobus fulgidus (strain ATCC 49558 / DSM 4304 / JCM 9628 / NBRC 100126 / VC-16).